The chain runs to 276 residues: MQHATDLISIIALGLVCAFIGGMLAQRMRLPPLVGYLVAGIAIGPFTPGFVGDPALASQLAELGVILLMFGVGLHFSIGDLLAVRTIALPGAIVQITVATAMGAGLAWGFGWGAGAGLVFGLALSVASTVVLLRALEGQGLLDSDKGRIAVGWLIVEDLAMVVALVLLPALAPSLGGEAMQAAGHHGPPEHGLWVTLGLTLAKVGVFVAVMLVGGRRLIPYLLGLAARTGSRELFTLAVLASAVGIAFASSELFGVSFALGAFFAGMVLAESDLSH.

7 consecutive transmembrane segments (helical) span residues Thr-5–Ala-25, Pro-32–Gly-52, Gly-64–Val-84, Ala-104–Leu-124, Ile-149–Pro-169, Leu-193–Val-213, and Val-244–Phe-264.

This sequence belongs to the monovalent cation:proton antiporter 2 (CPA2) transporter (TC 2.A.37) family.

Its subcellular location is the cell membrane. This is an uncharacterized protein from Methylorubrum extorquens (Methylobacterium dichloromethanicum).